The primary structure comprises 430 residues: Ribosomal protein uS12 methylthiotransferase RimO (430 aa).

Residues 4–119 (LKINFISLGC…IPVLFDIKPK (116 aa)) enclose the MTTase N-terminal domain. Residues cysteine 13, cysteine 49, cysteine 82, cysteine 141, cysteine 145, and cysteine 148 each coordinate [4Fe-4S] cluster. The Radical SAM core domain occupies 127–358 (STPKHTAYLK…SALQENITEQ (232 aa)). Residues 361 to 430 (KSLIGKELDI…DKYDVVGEAE (70 aa)) form the TRAM domain.

It belongs to the methylthiotransferase family. RimO subfamily. [4Fe-4S] cluster serves as cofactor.

Its subcellular location is the cytoplasm. The catalysed reaction is L-aspartate(89)-[ribosomal protein uS12]-hydrogen + (sulfur carrier)-SH + AH2 + 2 S-adenosyl-L-methionine = 3-methylsulfanyl-L-aspartate(89)-[ribosomal protein uS12]-hydrogen + (sulfur carrier)-H + 5'-deoxyadenosine + L-methionine + A + S-adenosyl-L-homocysteine + 2 H(+). Its function is as follows. Catalyzes the methylthiolation of an aspartic acid residue of ribosomal protein uS12. The sequence is that of Ribosomal protein uS12 methylthiotransferase RimO from Sulfurihydrogenibium sp. (strain YO3AOP1).